A 610-amino-acid polypeptide reads, in one-letter code: Transducer of Cdc42-dependent actin assembly protein 2 homolog (610 aa).

Positions 1–267 constitute an F-BAR domain; that stretch reads MIPVSRFFTV…EVGKIDAEGD (267 aa). Residues 283–315 form a disordered region; sequence APFEIEDLGDPKNCDSRTNDSADGSGGKLLKSS. Residues 291-302 are compositionally biased toward basic and acidic residues; sequence GDPKNCDSRTND. The REM-1 domain occupies 352–429; that stretch reads SKPAHVRLSC…IHNLKEFYAM (78 aa). Residues 355–385 are a coiled coil; sequence AHVRLSCLRSKIRDMEKQLEQAIQGREGITR. Disordered stretches follow at residues 436–487 and 499–519; these read EGQE…SSKN and LISSPKTSKSSTPTPLRRRAE. Residues 437–449 show a composition bias toward basic and acidic residues; the sequence is GQERSFGGRDTPD. Positions 453 to 464 are enriched in low complexity; it reads SMSGSSTNQSSS. Polar residues predominate over residues 475 to 487; that stretch reads AGNSSSADDSSKN. A compositionally biased stretch (low complexity) spans 501-513; sequence SSPKTSKSSTPTP. An SH3 domain is found at 547–610; it reads ETAVTVTALF…VPTSYLQFPQ (64 aa).

Belongs to the FNBP1 family. In terms of assembly, interacts (via SH3 domain) with wsp-1 and abi-1. Interacts with cdc-42 and (via SH3 domain) with wve-1.

It localises to the cell junction. Its subcellular location is the cell membrane. The protein localises to the cytoplasmic vesicle. It is found in the cytoplasm. The protein resides in the recycling endosome. In terms of biological role, plays a role in protein trafficking, actin organization and embryonic morphogenesis. Potentially acts as a cdc-42 effector. May play a role in egg laying. Together with toca-1, is required for protein trafficking regulating yolk protein clathrin-mediated endocytosis by oocytes during oogenesis and retrograde recycling and the sorting of recycling endosome cargo proteins such as mig-14. Also, together with toca-2, controls the distribution of actin at cell junctions. This is Transducer of Cdc42-dependent actin assembly protein 2 homolog from Caenorhabditis elegans.